The primary structure comprises 281 residues: Urease accessory protein UreD (281 aa).

Residues 1–25 are disordered; the sequence is MLNTLEPQPCETDALSPRLQRSTGS.

The protein belongs to the UreD family. In terms of assembly, ureD, UreF and UreG form a complex that acts as a GTP-hydrolysis-dependent molecular chaperone, activating the urease apoprotein by helping to assemble the nickel containing metallocenter of UreC. The UreE protein probably delivers the nickel.

The protein resides in the cytoplasm. In terms of biological role, required for maturation of urease via the functional incorporation of the urease nickel metallocenter. The sequence is that of Urease accessory protein UreD from Dinoroseobacter shibae (strain DSM 16493 / NCIMB 14021 / DFL 12).